The sequence spans 182 residues: Phospholipase A2 inhibitor gamma subunit A (182 aa).

Intrachain disulfides connect Cys3–Cys27, Cys6–Cys13, Cys20–Cys48, Cys54–Cys75, Cys76–Cys81, Cys99–Cys124, Cys117–Cys146, and Cys150–Cys172. A glycan (N-linked (GlcNAc...) asparagine) is linked at Asn157.

Belongs to the CNF-like-inhibitor family. As to quaternary structure, heterotrimer of 2 subunits A and 1 subunit B. N-glycosylation is not important for activity, since deglycosylation does not change its PLA2 inhibitory activity. As to expression, expressed by the liver.

The protein localises to the secreted. Functionally, strongly inhibits its own venom PLA2 and all other PLA2s tested including Elapid, Crotalid and Viperid venom PLA2s, as well as honeybee PLA2s. In Laticauda semifasciata (Black-banded sea krait), this protein is Phospholipase A2 inhibitor gamma subunit A.